The primary structure comprises 123 residues: Highly acidic elicitin 20 (123 aa).

The N-terminal stretch at 1–20 is a signal peptide; sequence MQFTALFAATAVALVGSVSA. Intrachain disulfides connect cysteine 23–cysteine 91, cysteine 47–cysteine 76, and cysteine 71–cysteine 115.

The protein belongs to the elicitin family.

Its subcellular location is the secreted. In terms of biological role, induces local and distal defense responses (incompatible hypersensitive reaction) in plants from the solanaceae and cruciferae families. Elicits leaf necrosis and causes the accumulation of pathogenesis-related proteins. Might interact with the lipidic molecules of the plasma membrane. This Phytophthora cryptogea protein is Highly acidic elicitin 20 (B20).